We begin with the raw amino-acid sequence, 882 residues long: Serine/threonine-protein kinase greatwall (882 aa).

The residue at position 1 (M1) is an N-acetylmethionine. Positions 35-838 constitute a Protein kinase domain; that stretch reads FTIVKPISRG…MKELKRHHLF (804 aa). ATP contacts are provided by residues 41 to 49 and K62; that span reads ISRGAFGKV. The Proton acceptor role is filled by D156. Phosphothreonine occurs at positions 207 and 222. S293, S371, and S454 each carry phosphoserine. Residue T521 is modified to Phosphothreonine. Phosphoserine occurs at positions 554, 558, 633, 660, and 671. A disordered region spans residues 713–736; it reads TPNQVKSGTPYRTPKSVRRGAAPV. T725 bears the Phosphothreonine mark. S728 carries the post-translational modification Phosphoserine. T744 is subject to Phosphothreonine; by CDK1. Positions 839–882 constitute an AGC-kinase C-terminal domain; sequence SDVDWENLQHQTMPFIPQPDDETDTSYFEARNNAQHLTISGFSL. Phosphoserine is present on residues S878 and S881.

Belongs to the protein kinase superfamily. AGC Ser/Thr protein kinase family. In terms of processing, phosphorylation at Thr-744 by CDK1 during M phase activates its kinase activity. Maximum phosphorylation occurs in prometaphase.

The protein localises to the cytoplasm. The protein resides in the cytoskeleton. It is found in the microtubule organizing center. Its subcellular location is the centrosome. It localises to the nucleus. It carries out the reaction L-seryl-[protein] + ATP = O-phospho-L-seryl-[protein] + ADP + H(+). The enzyme catalyses L-threonyl-[protein] + ATP = O-phospho-L-threonyl-[protein] + ADP + H(+). In terms of biological role, serine/threonine kinase that plays a key role in M phase by acting as a regulator of mitosis entry and maintenance. Acts by promoting the inactivation of protein phosphatase 2A (PP2A) during M phase: does not directly inhibit PP2A but acts by mediating phosphorylation and subsequent activation of ARPP19 and ENSA at 'Ser-62' and 'Ser-67', respectively. ARPP19 and ENSA are phosphatase inhibitors that specifically inhibit the PPP2R2D (PR55-delta) subunit of PP2A. Inactivation of PP2A during M phase is essential to keep cyclin-B1-CDK1 activity high. Following DNA damage, it is also involved in checkpoint recovery by being inhibited. The polypeptide is Serine/threonine-protein kinase greatwall (MASTL) (Ailuropoda melanoleuca (Giant panda)).